A 315-amino-acid polypeptide reads, in one-letter code: Mitochondrial glycine transporter (315 aa).

3 Solcar repeats span residues 19-102 (SKTT…LRTG), 125-206 (TANL…LKRR), and 221-305 (KSSS…LILR). Helical transmembrane passes span 25–50 (FTAGLFSGLTSSILLQPADLLKTRVQ), 77–103 (GTLPSALRTGFGSALYFTSLNALRTGL), 128–153 (LATGAAARVAAGFVMMPVTVIKVRYE), 181–204 (GFGATAARDAPYAGLYVLFYEQLK), 225–251 (INFVSGGLAAGLATTITNPFDAVKTRL), and 280–298 (GLGLRITRKALSSALAWTV).

It belongs to the mitochondrial carrier (TC 2.A.29) family. SLC25A38 subfamily.

The protein localises to the mitochondrion inner membrane. It catalyses the reaction glycine(in) = glycine(out). In terms of biological role, mitochondrial glycine transporter that imports glycine into the mitochondrial matrix. Plays an important role in providing glycine for the first enzymatic step in heme biosynthesis, the condensation of glycine with succinyl-CoA to produce 5-aminolevulinate (ALA) in the mitochondrial matrix. The sequence is that of Mitochondrial glycine transporter from Aspergillus niger (strain ATCC MYA-4892 / CBS 513.88 / FGSC A1513).